Here is a 476-residue protein sequence, read N- to C-terminus: Ribulose bisphosphate carboxylase large chain (476 aa).

The propeptide occupies 1 to 2 (MS). Residue P3 is modified to N-acetylproline. At K14 the chain carries N6,N6,N6-trimethyllysine. Substrate-binding residues include N123 and T173. K175 acts as the Proton acceptor in catalysis. K177 contributes to the substrate binding site. Residues K201, D203, and E204 each coordinate Mg(2+). An N6-carboxylysine modification is found at K201. The substrate site is built by R295, H327, and S379.

The protein belongs to the RuBisCO large chain family. Type I subfamily. In terms of assembly, heterohexadecamer of 8 large chains and 8 small chains; disulfide-linked. The disulfide link is formed within the large subunit homodimers. The cofactor is Mg(2+). In terms of processing, the disulfide bond which can form in the large chain dimeric partners within the hexadecamer appears to be associated with oxidative stress and protein turnover.

Its subcellular location is the plastid. The protein resides in the chloroplast. The enzyme catalyses 2 (2R)-3-phosphoglycerate + 2 H(+) = D-ribulose 1,5-bisphosphate + CO2 + H2O. The catalysed reaction is D-ribulose 1,5-bisphosphate + O2 = 2-phosphoglycolate + (2R)-3-phosphoglycerate + 2 H(+). In terms of biological role, ruBisCO catalyzes two reactions: the carboxylation of D-ribulose 1,5-bisphosphate, the primary event in carbon dioxide fixation, as well as the oxidative fragmentation of the pentose substrate in the photorespiration process. Both reactions occur simultaneously and in competition at the same active site. In Barnadesia caryophylla (Xenophontia caryophylla), this protein is Ribulose bisphosphate carboxylase large chain.